The following is a 467-amino-acid chain: Mothers against decapentaplegic homolog 2 (467 aa).

Serine 2 is modified (N-acetylserine). Threonine 8 carries the post-translational modification Phosphothreonine; by MAPK3. One can recognise an MH1 domain in the interval 10–176 (PVVKRLLGWK…YQRVETPVLP (167 aa)). The residue at position 19 (lysine 19) is an N6-acetyllysine. Cysteine 74, cysteine 149, cysteine 161, and histidine 166 together coordinate Zn(2+). A compositionally biased stretch (polar residues) spans 207–217 (PAGIEPQSNYI). The tract at residues 207-251 (PAGIEPQSNYIPETPPPGYISEDGETSDQQLNQSMDTGSPAELSP) is disordered. At threonine 220 the chain carries Phosphothreonine. The short motif at 221–225 (PPPGY) is the PY-motif element. The segment covering 233-243 (SDQQLNQSMDT) has biased composition (polar residues). Serine 240 is modified (phosphoserine; by CAMK2). Residues serine 245, serine 250, serine 255, serine 458, serine 460, and serine 464 each carry the phosphoserine modification. Positions 274–467 (WCSIAYYELN…SPSVRCSSMS (194 aa)) constitute an MH2 domain. Residues serine 465 and serine 467 each carry the phosphoserine; by TGFBR1 modification.

This sequence belongs to the dwarfin/SMAD family. In terms of assembly, monomer; in the absence of TGF-beta. Heterodimer; in the presence of TGF-beta. Forms a heterodimer with co-SMAD, SMAD4, in the nucleus to form the transactivation complex SMAD2/SMAD4. Found in a complex with SMAD3 and TRIM33 upon addition of TGF-beta. Identified in a complex that contains at least ZNF451, SMAD2, SMAD3 and SMAD4. Interacts (via the MH2 domain) with ZFYVE9; may form trimers with the SMAD4 co-SMAD. Interacts with TAZ/WWRT1. Interacts with FOXH1. Interacts with SNW1. Interacts with CREB-binding protein (CBP) and EP300. Interacts with SNON. Interacts with ALK4/ACVR1B. Interacts with SKOR1. Interacts with SKOR2. Interacts with PRDM16. Interacts (via MH2 domain) with LEMD3. Interacts with RBPMS. Interacts with WWP1. Interacts (dephosphorylated form, via the MH1 and MH2 domains) with RANBP3 (via its C-terminal R domain); the interaction results in the export of dephosphorylated SMAD3 out of the nucleus and termination of the TGF-beta signaling. Interacts with PDPK1 (via PH domain). Interacts with DAB2; the interactions are enhanced upon TGF-beta stimulation. Interacts with USP15. Interacts with PPP5C. Interacts with LDLRAD4 (via the SMAD interaction motif). Interacts (via MH2 domain) with PMEPA1 (via the SMAD interaction motif). Interacts with ZFHX3. Interacts with ZNF451. Interacts with SMURF2 when phosphorylated on Ser-465/467. Interacts with PPM1A. Interacts with TGF-beta. Interacts with TGFBR1. Interacts with TGIF. Interacts with SMAD3 and TRIM33. Interacts with ZNF580. Interacts with NEDD4L in response to TGF-beta. Interacts with HGS. Interacts with AIP1. Interacts with WWP1. Interacts with PML. Interacts weakly with ZNF8. Interacts (when phosphorylated) with RNF111; RNF111 acts as an enhancer of the transcriptional responses by mediating ubiquitination and degradation of SMAD2 inhibitors. Interacts with YAP1 (when phosphorylated at 'Ser-127'). Interacts when phosphorylated with IPO7; the interaction facilitates translocation of SMAD2 to the nucleus. Interacts with MTMR4; negatively regulates TGF-beta signaling through SMAD2 dephosphorylation and retention in endosomes. In terms of processing, phosphorylated on one or several of Thr-220, Ser-245, Ser-250, and Ser-255. In response to TGF-beta, phosphorylated on Ser-465/467 by TGF-beta and activin type 1 receptor kinases. TGF-beta-induced Ser-465/467 phosphorylation declines progressively in a KMT5A-dependent manner. Able to interact with SMURF2 when phosphorylated on Ser-465/467, recruiting other proteins, such as SNON, for degradation. In response to decorin, the naturally occurring inhibitor of TGF-beta signaling, phosphorylated on Ser-240 by CaMK2. Phosphorylated by MAPK3 upon EGF stimulation; which increases transcriptional activity and stability, and is blocked by calmodulin. Phosphorylated by PDPK1. In response to TGF-beta, ubiquitinated by NEDD4L; which promotes its degradation. Monoubiquitinated, leading to prevent DNA-binding. Deubiquitination by USP15 alleviates inhibition and promotes activation of TGF-beta target genes. Ubiquitinated by RNF111, leading to its degradation: only SMAD2 proteins that are 'in use' are targeted by RNF111, RNF111 playing a key role in activating SMAD2 and regulating its turnover. Post-translationally, acetylated on Lys-19 by coactivators in response to TGF-beta signaling, which increases transcriptional activity. Isoform short: Acetylation increases DNA binding activity in vitro and enhances its association with target promoters in vivo. Acetylation in the nucleus by EP300 is enhanced by TGF-beta. Expressed at high levels in skeletal muscle, endothelial cells, heart and placenta.

Its subcellular location is the cytoplasm. It is found in the nucleus. Its function is as follows. Receptor-regulated SMAD (R-SMAD) that is an intracellular signal transducer and transcriptional modulator activated by TGF-beta (transforming growth factor) and activin type 1 receptor kinases. Binds the TRE element in the promoter region of many genes that are regulated by TGF-beta and, on formation of the SMAD2/SMAD4 complex, activates transcription. Promotes TGFB1-mediated transcription of odontoblastic differentiation genes in dental papilla cells. Positively regulates PDPK1 kinase activity by stimulating its dissociation from the 14-3-3 protein YWHAQ which acts as a negative regulator. May act as a tumor suppressor in colorectal carcinoma. This chain is Mothers against decapentaplegic homolog 2 (SMAD2), found in Homo sapiens (Human).